Consider the following 121-residue polypeptide: Small ribosomal subunit protein uS13 (121 aa).

Residues 91–121 form a disordered region; sequence HRKGLPLRGQRTRTNARTRKGPRKAGVALKK.

The protein belongs to the universal ribosomal protein uS13 family. As to quaternary structure, part of the 30S ribosomal subunit. Forms a loose heterodimer with protein S19. Forms two bridges to the 50S subunit in the 70S ribosome.

Its function is as follows. Located at the top of the head of the 30S subunit, it contacts several helices of the 16S rRNA. In the 70S ribosome it contacts the 23S rRNA (bridge B1a) and protein L5 of the 50S subunit (bridge B1b), connecting the 2 subunits; these bridges are implicated in subunit movement. Contacts the tRNAs in the A and P-sites. The chain is Small ribosomal subunit protein uS13 from Cupriavidus pinatubonensis (strain JMP 134 / LMG 1197) (Cupriavidus necator (strain JMP 134)).